The chain runs to 690 residues: MTGLVGENFRRDGGVIPATITKNLNKSSGRQRAREKMADKEFFLSLLSSAATKRDAKAYLSRFPSVKKPKPPIPRQNQGAVETQSGKENEKPGVNLGSFYGATRSVLETPVFRQGPAPETETAHAIGLDEALHVALVKLANAQSLDDETIQGVALTLAQLTRLGMASCVVVDPGPMQDETTWRKAAAEQADRLSAAIDACDGGKARRLDSVLVKNKDRDLPKIISRQVLLRPLRNNHIVVVTPVAYSEETCKASSVPSSDAMLALTRELAGLERKHDPDEDPRVTAEIFAALQKEVAVDRLIVLDSVGGIPAFKGPQQSHVFVNMEQEFKDIEAELHEAMASIERFVDPSAESDITEAATKSNPISKFVATEVTPLSTGQQKPLIEANGGLMTSTLKGHIENLRLLQQTLTLLPPSSSAIITTPRDVANSARPHQDVLSVSQVGTRRQKNPLIHNLLTDKPVYSSSLPSERRGQTAPSIAPSTFLKRGMPLTILPDPRITPWSPNSPDGHHLTLDDPRIDLPRLVHLIEDSFNRKLDVQDYLSRVNGRLAGLIIAGEYEGGAILTWETPPDIPEQDRHKPENISRLVPYLDKFAVLKRSQGAGGVADIVFNAMVRTCLPGGVCWRSRMDNPVNKWYFERSRGTWKLNGSNWAMFWTTPRVPEEDPLKFRDYEAVCRSIQPSWADKKAVVD.

Residues 62-93 form a disordered region; it reads RFPSVKKPKPPIPRQNQGAVETQSGKENEKPG. The span at 75-84 shows a compositional bias: polar residues; the sequence is RQNQGAVETQ. Residues 508–679 form the N-acetyltransferase domain; it reads DGHHLTLDDP…DYEAVCRSIQ (172 aa).

This sequence belongs to the acetyltransferase family.

The protein resides in the mitochondrion. The enzyme catalyses L-glutamate + acetyl-CoA = N-acetyl-L-glutamate + CoA + H(+). Its pathway is amino-acid biosynthesis; L-arginine biosynthesis; N(2)-acetyl-L-ornithine from L-glutamate: step 1/4. In terms of biological role, N-acetylglutamate synthase involved in arginine biosynthesis. This Talaromyces stipitatus (strain ATCC 10500 / CBS 375.48 / QM 6759 / NRRL 1006) (Penicillium stipitatum) protein is Amino-acid acetyltransferase, mitochondrial (arg2).